We begin with the raw amino-acid sequence, 446 residues long: Packaging protein 1 (446 aa).

The segment at 1 to 71 (MEEKAGLGRL…QPQASKPKKH (71 aa)) is disordered. Basic and acidic residues predominate over residues 31–43 (FHSDRNHPNKEAE). 170 to 177 (GPTGCGKS) is a binding site for ATP. The tract at residues 439 to 446 (RYYHSKKK) is DNA-binding.

It belongs to the adenoviridae packaging protein 1 family. Homodimer. Part of a genome packaging complex composed of packaging proteins 1, 2 and 3; this complex specifically binds to the packaging sequence on the left end of viral genomic DNA and performs packaging of the viral genome. Interacts with protein 33K.

It is found in the virion. It localises to the host nucleus. The protein resides in the host nucleoplasm. Its subcellular location is the host nucleolus. Its function is as follows. Component of the packaging machinery which encapsidates the viral DNA into preformed capsids and transcriptional activator of the viral major late promoter (MLP). Binds, along with packaging proteins 2 and 3, to the specific packaging sequence on the left end of viral genomic DNA and displays ATPase activity thereby providing the power stroke of the packaging machinery. The activity of packaging protein IVa2 is stimulated by protein 33K which acts as a terminase. May be the protein that pumps DNA into the capsid powered by ATP hydrolysis. Specifically binds to the 5'-CG-3' nucleotides of the repeats making up the packaging sequence. Component of the DEF-A and DEF-B transcription factors that bind downstream elements of the major late promoter (MLP), and stimulate transcription from the MLP after initiation of viral DNA replication. DEF-A is a heterodimer packaging proteins 1 and 2 and DEF-B is a homodimer of packaging protein 1. In Canine adenovirus serotype 2 (strain Toronto A 26-61) (CAdV-2), this protein is Packaging protein 1.